The sequence spans 149 residues: Protein Rv2250A (149 aa).

This is Protein Rv2250A from Mycobacterium tuberculosis (strain ATCC 25618 / H37Rv).